Reading from the N-terminus, the 357-residue chain is Acyl-coenzyme A diphosphatase NUDT19 (357 aa).

The 233-residue stretch at 10 to 242 (AATVMLAAGW…IWLAPPQFYE (233 aa)) folds into the Nudix hydrolase domain. Residues 72–93 (PRFGLGPEPPRQPPFPGLSHGD) are disordered. The span at 78-87 (PEPPRQPPFP) shows a compositional bias: pro residues. Positions 97–118 (AALPDDVALRICAIREAFEEAG) match the Nudix box motif. Positions 112 and 116 each coordinate Mg(2+). The residue at position 300 (Lys-300) is an N6-succinyllysine. The Microbody targeting signal signature appears at 355 to 357 (AHL).

Belongs to the Nudix hydrolase family. As to quaternary structure, monomer. Mg(2+) is required as a cofactor. Mn(2+) serves as cofactor. In terms of tissue distribution, highly expressed in the kidneys, with lower levels in skeletal muscle and brain (at protein level).

It localises to the peroxisome. It carries out the reaction an acyl-CoA + H2O = an acyl-4'-phosphopantetheine + adenosine 3',5'-bisphosphate + 2 H(+). The enzyme catalyses CoA + H2O = (R)-4'-phosphopantetheine + adenosine 3',5'-bisphosphate + 2 H(+). The catalysed reaction is hexanoyl-CoA + H2O = hexanoyl-4'-phosphopantetheine + adenosine 3',5'-bisphosphate + 2 H(+). It catalyses the reaction octanoyl-CoA + H2O = S-octanoyl-4'-phosphopantetheine + adenosine 3',5'-bisphosphate + 2 H(+). It carries out the reaction butanoyl-CoA + H2O = S-butanoyl-4'-phosphopantetheine + adenosine 3',5'-bisphosphate + 2 H(+). The enzyme catalyses propanoyl-CoA + H2O = propanoyl-4'-phosphopantetheine + adenosine 3',5'-bisphosphate + 2 H(+). The catalysed reaction is malonyl-CoA + H2O = malonyl-4'-phosphopantetheine + adenosine 3',5'-bisphosphate + 2 H(+). It catalyses the reaction succinyl-CoA + H2O = succinyl-4'-phosphopantetheine + adenosine 3',5'-bisphosphate + 2 H(+). It carries out the reaction choloyl-CoA + H2O = S-choloyl-4'-phosphopantetheine + adenosine 3',5'-bisphosphate + 2 H(+). The enzyme catalyses 4,8-dimethylnonanoyl-CoA + H2O = S-(4,8-dimethylnonanoyl)-4'-phosphopantetheine + adenosine 3',5'-bisphosphate + 2 H(+). The catalysed reaction is (9Z,12Z,15Z)-octadecatrienoyl-CoA + H2O = S-(9Z,12Z,15Z-octadecatrienoyl)-4'-phosphopantetheine + adenosine 3',5'-bisphosphate + 2 H(+). It catalyses the reaction (9Z,12Z)-octadecadienoyl-CoA + H2O = S-(9Z,12Z-octadecadienoyl)-4'-phosphopantetheine + adenosine 3',5'-bisphosphate + 2 H(+). It carries out the reaction (9Z)-hexadecenoyl-CoA + H2O = S-(9Z-hexadecenoyl)-4'-phosphopantetheine + adenosine 3',5'-bisphosphate + 2 H(+). The enzyme catalyses (9Z)-tetradecenoyl-CoA + H2O = S-(9Z-tetradecenoyl)-4'-phosphopantetheine + adenosine 3',5'-bisphosphate + 2 H(+). The catalysed reaction is (6Z)-octenoyl-CoA + H2O = S-(6Z-octenoyl)-4'-phosphopantetheine + adenosine 3',5'-bisphosphate + 2 H(+). It catalyses the reaction hexadecanoyl-CoA + H2O = S-hexadecanoyl-4'-phosphopantetheine + adenosine 3',5'-bisphosphate + 2 H(+). It carries out the reaction tetradecanoyl-CoA + H2O = tetradecanoyl-4'-phosphopantetheine + adenosine 3',5'-bisphosphate + 2 H(+). The enzyme catalyses dodecanoyl-CoA + H2O = S-dodecanoyl-4'-phosphopantetheine + adenosine 3',5'-bisphosphate + 2 H(+). The catalysed reaction is a 5'-end CoA-ribonucleoside in mRNA + H2O = a 5'-end phospho-adenosine-phospho-ribonucleoside in mRNA + (R)-4'-phosphopantetheine + 2 H(+). Its activity is regulated as follows. Inhibited by chenodeoxycholic acid (CDCA) and its conjugated derivatives, taurochenodeoxycholic acid and glycochenodeoxycholic acid. Inhibited by fluoride. Functionally, fatty acyl-coenzyme A (CoA) diphosphatase that hydrolyzes fatty acyl-CoA to yield acyl-4'-phosphopantetheine and adenosine 3',5'-bisphosphate. Mediates the hydrolysis of a wide range of CoA esters, including choloyl-CoA and branched-chain fatty-acyl-CoA esters and at low substrate concentrations medium and long-chain fatty-acyl-CoA esters are the primary substrates. Highest activity seen with medium-chain acyl-CoA esters and higher rates of activity seen with the unsaturated acyl-CoA esters compared with the saturated esters. Exhibits decapping activity towards dpCoA-capped RNAs in vitro. This Mus musculus (Mouse) protein is Acyl-coenzyme A diphosphatase NUDT19 (Nudt19).